A 759-amino-acid polypeptide reads, in one-letter code: Protein MEI2-like 3 (759 aa).

RRM domains are found at residues 166-239 (RTLF…FSIP) and 251-324 (GTLV…HSRP).

Its function is as follows. Probable RNA-binding protein that plays a role in meiosis and vegetative growth. This is Protein MEI2-like 3 (ML3) from Arabidopsis thaliana (Mouse-ear cress).